A 547-amino-acid polypeptide reads, in one-letter code: Chaperonin GroEL (547 aa).

ATP-binding positions include 30–33, Lys-51, 87–91, Gly-415, and Asp-496; these read TLGP and DGTTT. Residues 527–547 are disordered; it reads SDKAEPMPMRGGMGGMGGMDF. The span at 537–547 shows a compositional bias: gly residues; sequence GGMGGMGGMDF.

The protein belongs to the chaperonin (HSP60) family. As to quaternary structure, forms a cylinder of 14 subunits composed of two heptameric rings stacked back-to-back. Interacts with the co-chaperonin GroES.

Its subcellular location is the cytoplasm. The catalysed reaction is ATP + H2O + a folded polypeptide = ADP + phosphate + an unfolded polypeptide.. Together with its co-chaperonin GroES, plays an essential role in assisting protein folding. The GroEL-GroES system forms a nano-cage that allows encapsulation of the non-native substrate proteins and provides a physical environment optimized to promote and accelerate protein folding. The sequence is that of Chaperonin GroEL from Rickettsia africae (strain ESF-5).